A 420-amino-acid chain; its full sequence is Probable endo-beta-1,4-glucanase celB (420 aa).

Positions 1 to 18 (MLRKLTPLALALLPLVAG) are cleaved as a signal peptide. An N-linked (GlcNAc...) asparagine glycan is attached at Asn118. Glu215 serves as the catalytic Nucleophile. Residue Glu220 is the Proton donor of the active site. Residues Asn234, Asn293, and Asn383 are each glycosylated (N-linked (GlcNAc...) asparagine).

The protein belongs to the glycosyl hydrolase 7 (cellulase C) family.

It localises to the secreted. The enzyme catalyses Endohydrolysis of (1-&gt;4)-beta-D-glucosidic linkages in cellulose, lichenin and cereal beta-D-glucans.. Functionally, has endoglucanase activity on substrates containing beta-1,4 glycosidic bonds, like in carboxymethylcellulose (CMC), hydroxyethylcellulose (HEC) and beta-glucan. Involved in the degradation of complex natural cellulosic substrates. The protein is Probable endo-beta-1,4-glucanase celB (celB) of Aspergillus terreus (strain NIH 2624 / FGSC A1156).